Reading from the N-terminus, the 49-residue chain is Heme exporter protein C (49 aa).

The protein belongs to the CcmC/CycZ/HelC family.

The protein localises to the cell inner membrane. Functionally, required for the export of heme to the periplasm for the biogenesis of c-type cytochromes. The protein is Heme exporter protein C of Rhizobium leguminosarum bv. viciae.